Reading from the N-terminus, the 240-residue chain is Pyridoxine 5'-phosphate synthase (240 aa).

N7 contributes to the 3-amino-2-oxopropyl phosphate binding site. A 1-deoxy-D-xylulose 5-phosphate-binding site is contributed by 9 to 10 (DH). R18 is a 3-amino-2-oxopropyl phosphate binding site. H43 functions as the Proton acceptor in the catalytic mechanism. The 1-deoxy-D-xylulose 5-phosphate site is built by R45 and H50. E70 functions as the Proton acceptor in the catalytic mechanism. T100 serves as a coordination point for 1-deoxy-D-xylulose 5-phosphate. Catalysis depends on H191, which acts as the Proton donor. 3-amino-2-oxopropyl phosphate is bound by residues G192 and 213 to 214 (GH).

It belongs to the PNP synthase family. As to quaternary structure, homooctamer; tetramer of dimers.

Its subcellular location is the cytoplasm. The catalysed reaction is 3-amino-2-oxopropyl phosphate + 1-deoxy-D-xylulose 5-phosphate = pyridoxine 5'-phosphate + phosphate + 2 H2O + H(+). The protein operates within cofactor biosynthesis; pyridoxine 5'-phosphate biosynthesis; pyridoxine 5'-phosphate from D-erythrose 4-phosphate: step 5/5. Functionally, catalyzes the complicated ring closure reaction between the two acyclic compounds 1-deoxy-D-xylulose-5-phosphate (DXP) and 3-amino-2-oxopropyl phosphate (1-amino-acetone-3-phosphate or AAP) to form pyridoxine 5'-phosphate (PNP) and inorganic phosphate. The protein is Pyridoxine 5'-phosphate synthase of Cyanothece sp. (strain PCC 7425 / ATCC 29141).